Consider the following 61-residue polypeptide: Large ribosomal subunit protein uL29 (61 aa).

This sequence belongs to the universal ribosomal protein uL29 family.

The sequence is that of Large ribosomal subunit protein uL29 from Campylobacter lari (strain RM2100 / D67 / ATCC BAA-1060).